The chain runs to 108 residues: Large ribosomal subunit protein uL24 (108 aa).

This sequence belongs to the universal ribosomal protein uL24 family. As to quaternary structure, part of the 50S ribosomal subunit.

Functionally, one of two assembly initiator proteins, it binds directly to the 5'-end of the 23S rRNA, where it nucleates assembly of the 50S subunit. Its function is as follows. One of the proteins that surrounds the polypeptide exit tunnel on the outside of the subunit. The chain is Large ribosomal subunit protein uL24 from Frankia casuarinae (strain DSM 45818 / CECT 9043 / HFP020203 / CcI3).